The sequence spans 357 residues: Fructose-1,6-bisphosphatase class 1 2 (357 aa).

Mg(2+)-binding residues include Glu-90, Asp-112, Leu-114, and Asp-115. Substrate-binding positions include 115–118 (DGSS) and Asn-206. Glu-278 lines the Mg(2+) pocket.

The protein belongs to the FBPase class 1 family. Homotetramer. Mg(2+) is required as a cofactor.

It localises to the cytoplasm. The catalysed reaction is beta-D-fructose 1,6-bisphosphate + H2O = beta-D-fructose 6-phosphate + phosphate. Its pathway is carbohydrate biosynthesis; gluconeogenesis. The polypeptide is Fructose-1,6-bisphosphatase class 1 2 (Dechloromonas aromatica (strain RCB)).